The following is a 226-amino-acid chain: Enolase-phosphatase E1 (226 aa).

Belongs to the HAD-like hydrolase superfamily. MasA/MtnC family. As to quaternary structure, monomer. Mg(2+) serves as cofactor.

It carries out the reaction 5-methylsulfanyl-2,3-dioxopentyl phosphate + H2O = 1,2-dihydroxy-5-(methylsulfanyl)pent-1-en-3-one + phosphate. Its pathway is amino-acid biosynthesis; L-methionine biosynthesis via salvage pathway; L-methionine from S-methyl-5-thio-alpha-D-ribose 1-phosphate: step 3/6. The protein operates within amino-acid biosynthesis; L-methionine biosynthesis via salvage pathway; L-methionine from S-methyl-5-thio-alpha-D-ribose 1-phosphate: step 4/6. Functionally, bifunctional enzyme that catalyzes the enolization of 2,3-diketo-5-methylthiopentyl-1-phosphate (DK-MTP-1-P) into the intermediate 2-hydroxy-3-keto-5-methylthiopentenyl-1-phosphate (HK-MTPenyl-1-P), which is then dephosphorylated to form the acireductone 1,2-dihydroxy-3-keto-5-methylthiopentene (DHK-MTPene). The polypeptide is Enolase-phosphatase E1 (Shewanella putrefaciens (strain CN-32 / ATCC BAA-453)).